Reading from the N-terminus, the 82-residue chain is RNA-binding protein YbxF (82 aa).

The protein belongs to the eukaryotic ribosomal protein eL8 family.

The protein is RNA-binding protein YbxF of Geobacillus stearothermophilus (Bacillus stearothermophilus).